Consider the following 986-residue polypeptide: Translation initiation factor IF-2 (986 aa).

The interval 95–394 (TFVRRDETSA…GRGKHQDQNT (300 aa)) is disordered. Residues 122–182 (ELQRREEEAR…EEEAAKKRAA (61 aa)) are compositionally biased toward basic and acidic residues. Low complexity predominate over residues 183–222 (AEAAAREQAQAAKPAQAAQPAAAKAEPVAAKAAEPAVAKQ). The span at 228–277 (ERAAAERAAQREAAKKAEDAARQAAEKARAEQEQIAKRRAAAEAEARAIR) shows a compositional bias: basic and acidic residues. Residues 320 to 342 (APSRPAAKKPAAAAPAATTTPSA) are compositionally biased toward low complexity. Residues 371–384 (TSGGVDRGWRGGPK) are compositionally biased toward gly residues. In terms of domain architecture, tr-type G spans 486–655 (PRPPVVTVMG…LLQAEVLELK (170 aa)). Residues 495-502 (GHVDHGKT) are G1. Residue 495–502 (GHVDHGKT) coordinates GTP. Residues 520 to 524 (GITQH) form a G2 region. The tract at residues 541-544 (DTPG) is G3. Residues 541 to 545 (DTPGH) and 595 to 598 (NKID) contribute to the GTP site. Residues 595 to 598 (NKID) are G4. Residues 631 to 633 (SAK) are G5.

It belongs to the TRAFAC class translation factor GTPase superfamily. Classic translation factor GTPase family. IF-2 subfamily.

The protein localises to the cytoplasm. Functionally, one of the essential components for the initiation of protein synthesis. Protects formylmethionyl-tRNA from spontaneous hydrolysis and promotes its binding to the 30S ribosomal subunits. Also involved in the hydrolysis of GTP during the formation of the 70S ribosomal complex. The polypeptide is Translation initiation factor IF-2 (Paraburkholderia phytofirmans (strain DSM 17436 / LMG 22146 / PsJN) (Burkholderia phytofirmans)).